A 324-amino-acid polypeptide reads, in one-letter code: Chlorophyllase-1 (324 aa).

The short motif at 136 to 140 (GHSRG) is the GXSXG element. The active-site Nucleophile is the serine 138. Active-site charge relay system residues include aspartate 168 and histidine 243.

It belongs to the AB hydrolase superfamily. Lipase family. In terms of tissue distribution, expressed in seedlings, leaves, flowers and siliques, but not in roots.

It is found in the cytoplasm. Its subcellular location is the cytosol. It catalyses the reaction a chlorophyll + H2O = a chlorophyllide + phytol + H(+). The enzyme catalyses chlorophyll a + H2O = phytol + chlorophyllide a + H(+). It functions in the pathway porphyrin-containing compound metabolism; chlorophyll degradation. Functionally, catalyzes the hydrolysis of ester bond in chlorophyll to yield chlorophyllide and phytol. Shows a preferential activity toward chlorophyll a. Does not seem to be required for chlorophyll degradation during senescence. May modulate the balance between different plant defense pathways. This is Chlorophyllase-1 from Arabidopsis thaliana (Mouse-ear cress).